Here is a 400-residue protein sequence, read N- to C-terminus: Argininosuccinate synthase (400 aa).

ATP contacts are provided by residues 10–18 (AYSGGVDTS) and Ala38. Tyr89 is a binding site for L-citrulline. Gly119 contributes to the ATP binding site. 3 residues coordinate L-aspartate: Thr121, Asn125, and Asp126. Asn125 contributes to the L-citrulline binding site. Positions 129, 177, 262, and 274 each coordinate L-citrulline.

The protein belongs to the argininosuccinate synthase family. Type 1 subfamily. In terms of assembly, homotetramer.

It is found in the cytoplasm. It catalyses the reaction L-citrulline + L-aspartate + ATP = 2-(N(omega)-L-arginino)succinate + AMP + diphosphate + H(+). It functions in the pathway amino-acid biosynthesis; L-arginine biosynthesis; L-arginine from L-ornithine and carbamoyl phosphate: step 2/3. The sequence is that of Argininosuccinate synthase from Trichodesmium erythraeum (strain IMS101).